A 1325-amino-acid chain; its full sequence is ATP-binding cassette sub-family C member 4 (1325 aa).

Residues 92–377 (YLVLGIFTLI…FFPSAIERVS (286 aa)) form the ABC transmembrane type-1 1 domain. The next 7 helical transmembrane spans lie at 93–113 (LVLG…PIFL), 136–156 (AYAT…HLYF), 207–227 (QVTV…AVTA), 228–248 (LLWM…IILL), 328–348 (SKII…VITA), 351–371 (VFVA…FFPS), and 440–460 (LLAV…AVLG). An ABC transporter 1 domain is found at 410 to 633 (VHVQDFTAFW…GIDFGSLLKK (224 aa)). 445–452 (GPVGAGKS) contacts ATP. 2 positions are modified to phosphothreonine: threonine 646 and threonine 648. A compositionally biased stretch (low complexity) spans 657–667 (SSVWSQQSSRP). The disordered stretch occupies residues 657 to 688 (SSVWSQQSSRPSLKDGALESQDTENVPVTLSE). Phosphoserine occurs at positions 664 and 668. A helical transmembrane segment spans residues 710–730 (HWIVFIFLILLNTAAQVAYVL). The region spanning 714–1005 (FIFLILLNTA…CVRQSAEVEN (292 aa)) is the ABC transmembrane type-1 2 domain. 2 N-linked (GlcNAc...) asparagine glycosylation sites follow: asparagine 746 and asparagine 754. The next 6 membrane-spanning stretches (helical) occupy residues 771-791 (LTVA…YVLV), 836-856 (LPLT…VVSV), 858-878 (VAVI…FIFL), 954-974 (AICA…AKTL), 977-997 (GQVG…QWCV), and 1038-1058 (EGVI…PLVL). The ABC transporter 2 domain maps to 1041–1274 (IIFDNVNFMY…KESLFYKMVQ (234 aa)). ATP is bound at residue 1075-1082 (GRTGAGKS). The short motif at 1322–1325 (ETAL) is the PDZ-binding element.

The protein belongs to the ABC transporter superfamily. ABCC family. Conjugate transporter (TC 3.A.1.208) subfamily. In terms of assembly, interacts (via PDZ-binding motif) with SNX27 (via PDZ domain); this interaction accelerates MRP4 internalization. Mg(2+) is required as a cofactor. In terms of processing, N-glycosylated; leading to substrate-selective effects on its transport activity. As to expression, widely expressed, with particularly high levels in prostate, but is barely detectable in liver. sinusoidal membrane of hepatocytes.

It is found in the basolateral cell membrane. The protein resides in the apical cell membrane. It carries out the reaction ATP + H2O + xenobioticSide 1 = ADP + phosphate + xenobioticSide 2.. The catalysed reaction is an S-substituted glutathione(in) + ATP + H2O = an S-substituted glutathione(out) + ADP + phosphate + H(+). The enzyme catalyses 17beta-estradiol 17-O-(beta-D-glucuronate)(in) + ATP + H2O = 17beta-estradiol 17-O-(beta-D-glucuronate)(out) + ADP + phosphate + H(+). It catalyses the reaction dehydroepiandrosterone 3-sulfate(in) + ATP + H2O = dehydroepiandrosterone 3-sulfate(out) + ADP + phosphate + H(+). It carries out the reaction leukotriene C4(in) + ATP + H2O = leukotriene C4(out) + ADP + phosphate + H(+). The catalysed reaction is leukotriene B4(in) + ATP + H2O = leukotriene B4(out) + ADP + phosphate + H(+). The enzyme catalyses urate(in) + ATP + H2O = urate(out) + ADP + phosphate + H(+). It catalyses the reaction 3',5'-cyclic GMP(in) + ATP + H2O = 3',5'-cyclic GMP(out) + ADP + phosphate + H(+). It carries out the reaction 3',5'-cyclic AMP(in) + ATP + H2O = 3',5'-cyclic AMP(out) + ADP + phosphate + H(+). The catalysed reaction is prostaglandin E2(in) + ATP + H2O = prostaglandin E2(out) + ADP + phosphate + H(+). The enzyme catalyses prostaglandin E1(in) + ATP + H2O = prostaglandin E1(out) + ADP + phosphate + H(+). It catalyses the reaction glycodeoxycholate(in) + glutathione(in) + ATP + H2O = glycodeoxycholate(out) + glutathione(out) + ADP + phosphate + H(+). It carries out the reaction cholate(in) + glutathione(in) + ATP + H2O = cholate(out) + glutathione(out) + ADP + phosphate + H(+). The catalysed reaction is glycocholate(in) + glutathione(in) + ATP + H2O = glycocholate(out) + glutathione(out) + ADP + phosphate + H(+). The enzyme catalyses taurocholate(in) + glutathione(in) + ATP + H2O = taurocholate(out) + glutathione(out) + ADP + phosphate + H(+). It catalyses the reaction glycochenodeoxycholate(in) + glutathione(in) + ATP + H2O = glycochenodeoxycholate(out) + glutathione(out) + ADP + phosphate + H(+). It carries out the reaction taurochenodeoxycholate(in) + glutathione(in) + ATP + H2O = taurochenodeoxycholate(out) + glutathione(out) + ADP + phosphate + H(+). The catalysed reaction is glycoursodeoxycholate(in) + glutathione(in) + ATP + H2O = glycoursodeoxycholate(out) + glutathione(out) + ADP + phosphate + H(+). The enzyme catalyses tauroursodeoxycholate(in) + glutathione(in) + ATP + H2O = tauroursodeoxycholate(out) + glutathione(out) + ADP + phosphate + H(+). With respect to regulation, GSH stimulates the transport of MRP4. Urate inhibits methotrexate transport but stimulates cGMP transport. Nonsteroidal anti-inflammatory drugs (NSAIDs) strongly suppress the transport of MRP4 substrates. In terms of biological role, ATP-dependent transporter of the ATP-binding cassette (ABC) family that actively extrudes physiological compounds and xenobiotics from cells. Transports a range of endogenous molecules that have a key role in cellular communication and signaling, including cyclic nucleotides such as cyclic AMP (cAMP) and cyclic GMP (cGMP), bile acids, steroid conjugates, urate, and prostaglandins. Mediates the ATP-dependent efflux of glutathione conjugates such as leukotriene C4 (LTC4) and leukotriene B4 (LTB4) too. The presence of GSH is necessary for the ATP-dependent transport of LTB4, whereas GSH is not required for the transport of LTC4. Mediates the cotransport of bile acids with reduced glutathione (GSH). Transports a wide range of drugs and their metabolites, including anticancer, antiviral and antibiotics molecules. Confers resistance to anticancer agents such as methotrexate. This Homo sapiens (Human) protein is ATP-binding cassette sub-family C member 4 (ABCC4).